The primary structure comprises 1202 residues: Protein jagged-2 (1202 aa).

Topologically, residues 1–1037 (GACCDGDGRT…ETVVMGGSST (1037 aa)) are extracellular. An N-linked (GlcNAc...) asparagine glycan is attached at Asn107. The DSL domain maps to 150 to 194 (VRCDENYYSATCNKFCRPRNDFFGHYTCDQYGNKACMDGWMGKEC). Intrachain disulfides connect Cys152/Cys161, Cys165/Cys177, Cys185/Cys194, Cys199/Cys210, Cys203/Cys216, Cys218/Cys227, Cys230/Cys241, Cys236/Cys247, Cys249/Cys258, Cys265/Cys277, Cys271/Cys287, Cys289/Cys298, Cys305/Cys316, Cys310/Cys325, Cys327/Cys336, Cys343/Cys354, Cys348/Cys363, Cys365/Cys374, Cys381/Cys392, Cys386/Cys401, Cys403/Cys412, Cys419/Cys429, Cys423/Cys438, Cys440/Cys449, Cys456/Cys467, Cys461/Cys476, Cys478/Cys487, Cys495/Cys506, Cys500/Cys515, Cys517/Cys526, Cys544/Cys567, Cys561/Cys577, Cys579/Cys588, Cys595/Cys606, Cys600/Cys615, Cys617/Cys626, Cys633/Cys644, Cys638/Cys653, Cys655/Cys664, Cys671/Cys682, Cys676/Cys691, and Cys693/Cys702. Residues 195 to 228 (KEAVCKQGCNLLHGGCTVPGECRCSYGWQGKFCD) enclose the EGF-like 1 domain. Residues 229 to 259 (ECVPYPGCVHGSCVEPWHCDCETNWGGLLCD) form the EGF-like 2; atypical domain. 2 EGF-like domains span residues 261-299 (DLNYCGSHHPCVNGGTCINAEPDQYLCACPDGYLGKNCE) and 301-337 (AEHACASNPCANGGSCHEVLSGFECHCPSGWSGPTCA). Residues 339–375 (DIDECASNPCAAGGTCVDQVDGFECICPEQWVGATCQ) form the EGF-like 5; calcium-binding domain. Positions 377–413 (DANECEGKPCLNAFSCKNLIGGYYCDCLPGWKGANCH) constitute an EGF-like 6; calcium-binding domain. The EGF-like 7; calcium-binding domain maps to 415-450 (NINDCHGQCQHGGTCKDLVNGYQCVCPRGFGGRHCE). EGF-like domains are found at residues 452 to 488 (EYYKCASSPCRRGGICEDLVDGFRCHCPRGLSGPLCE) and 490 to 527 (DVDLWCEPNPCLNGARCYNLEDDYYCACPEDFGGKNCS). Residue Asn525 is glycosylated (N-linked (GlcNAc...) asparagine). The 61-residue stretch at 529–589 (PRETCPGGAC…DSGFTGTYCH (61 aa)) folds into the EGF-like 10; atypical domain. Asn574 carries an N-linked (GlcNAc...) asparagine glycan. The EGF-like 11; calcium-binding domain occupies 591-627 (NIDDCMGQPCRNGGTCIDEVDSFACFCPSGWEGELCD). Residues 629-665 (NPNDCLPDPCHSRGRCYDLVNDFYCVCDDGWKDKTCH) form the EGF-like 12; calcium-binding domain. EGF-like domains lie at 667 to 703 (REFQCDAYTCSNGGTCYDSGDTFRCACPPGWKGSTCT) and 706 to 742 (KNSSCVPNPCVNGGTCVGSGDSFSCICRDGWEGRTCT). An N-linked (GlcNAc...) asparagine glycan is attached at Asn707. Cystine bridges form between Cys710/Cys721, Cys715/Cys730, Cys732/Cys741, Cys748/Cys759, Cys753/Cys768, Cys770/Cys779, Cys786/Cys797, Cys791/Cys806, and Cys808/Cys817. The EGF-like 15; calcium-binding domain maps to 744–780 (NTNDCNPLPCYNGGICVDGVNWFRCECAPGFAGPDCR). In terms of domain architecture, EGF-like 16; calcium-binding spans 782 to 818 (NIDECQSSPCAYGATCVDEINGYRCSCPPGRSGPRCQ). Asn1015 is a glycosylation site (N-linked (GlcNAc...) asparagine). The helical transmembrane segment at 1038-1058 (GLLVPVLCSVFSVLWLACMVI) threads the bilayer. Over 1059–1202 (CVWWTRKRRK…TKDVRCAGRE (144 aa)) the chain is Cytoplasmic. Composition is skewed to basic and acidic residues over residues 1070–1080 (RERSRLPRDES), 1147–1159 (LSRGDGRLSRSRE), and 1185–1202 (VDNRAVRSTKDVRCAGRE). A disordered region spans residues 1070–1202 (RERSRLPRDE…TKDVRCAGRE (133 aa)). Ser1080 carries the post-translational modification Phosphoserine.

The protein resides in the membrane. Functionally, putative Notch ligand involved in the mediation of Notch signaling. May have a role in neurogenesis in the peripheral nervous system, limb development and in the adult brain. The sequence is that of Protein jagged-2 (Jag2) from Rattus norvegicus (Rat).